A 332-amino-acid polypeptide reads, in one-letter code: Procathepsin L (332 aa).

Residues 1–17 (MHPLLFLAGLCLGVASA) form the signal peptide. A propeptide spans 18 to 112 (APQLYQSLDA…KVFQAPFFVE (95 aa)) (activation peptide). Glutamate 121 contributes to the Zn(2+) binding site. Residue cysteine 137 is part of the active site. The Zn(2+) site is built by glutamate 162, aspartate 183, glutamate 198, and aspartate 208. A disulfide bridge links cysteine 168 with cysteine 210. Residue asparagine 220 is glycosylated (N-linked (GlcNAc...) asparagine). Aspartate 226, aspartate 249, aspartate 272, and aspartate 274 together coordinate Zn(2+). Cysteine 268 and cysteine 321 form a disulfide bridge. Residue histidine 275 is part of the active site. A propeptide spanning residues 288-290 (ETE) is cleaved from the precursor. Asparagine 299 is a catalytic residue.

The protein belongs to the peptidase C1 family. As to quaternary structure, dimer of a heavy and a light chain linked by disulfide bonds. Interacts with Long isoform of CD74/Ii chain; the interaction stabilizes the conformation of mature CTSL. During export along the endocytic pathway, pro-CTSL undergoes several proteolytic cleavages to generate the CTSL single-chain and two-chain mature forms, composed of a heavy chain linked to a light chain by disulfide bonds. Autocleavage; produces the single-chain CTSL after cleavage of the propeptide. The cleavage can be intermolecular. In terms of tissue distribution, expressed in the endometrium.

The protein localises to the lysosome. The protein resides in the apical cell membrane. Its subcellular location is the cytoplasmic vesicle. It is found in the secretory vesicle. It localises to the chromaffin granule. The protein localises to the secreted. The protein resides in the extracellular space. The enzyme catalyses Specificity close to that of papain. As compared to cathepsin B, cathepsin L exhibits higher activity toward protein substrates, but has little activity on Z-Arg-Arg-NHMec, and no peptidyl-dipeptidase activity.. Its activity is regulated as follows. Inhibited by the propeptide produced by autocleavage. Long isoform of CD74/Ii chain stabilizes the conformation of mature CTSL by binding to its active site and serving as a chaperone to help maintain a pool of mature enzyme in endocytic compartments and extracellular space of APCs. IFNG enhances the conversion into the CTSL mature and active form. Inhibited by CST6. Inhibited by the glycopeptide antibiotic teicoplanin. Inhibited by amantadine. Thiol protease important for the overall degradation of proteins in lysosomes. Plays a critical for normal cellular functions such as general protein turnover, antigen processing and bone remodeling. Involved in the solubilization of cross-linked TG/thyroglobulin and in the subsequent release of thyroid hormone thyroxine (T4) by limited proteolysis of TG/thyroglobulin in the thyroid follicle lumen. In neuroendocrine chromaffin cells secretory vesicles, catalyzes the prohormone proenkephalin processing to the active enkephalin peptide neurotransmitter. In thymus, regulates CD4(+) T cell positive selection by generating the major histocompatibility complex class II (MHCII) bound peptide ligands presented by cortical thymic epithelial cells. Also mediates invariant chain processing in cortical thymic epithelial cells. Major elastin-degrading enzyme at neutral pH. Accumulates as a mature and active enzyme in the extracellular space of antigen presenting cells (APCs) to regulate degradation of the extracellular matrix in the course of inflammation. Secreted form generates endostatin from COL18A1. Critical for cardiac morphology and function. Plays an important role in hair follicle morphogenesis and cycling, as well as epidermal differentiation. Required for maximal stimulation of steroidogenesis by TIMP1. The chain is Procathepsin L (CTSL) from Felis catus (Cat).